A 155-amino-acid chain; its full sequence is Protein-export protein SecB (155 aa).

This sequence belongs to the SecB family. As to quaternary structure, homotetramer, a dimer of dimers. One homotetramer interacts with 1 SecA dimer.

It localises to the cytoplasm. Its function is as follows. One of the proteins required for the normal export of preproteins out of the cell cytoplasm. It is a molecular chaperone that binds to a subset of precursor proteins, maintaining them in a translocation-competent state. It also specifically binds to its receptor SecA. The sequence is that of Protein-export protein SecB from Enterobacter sp. (strain 638).